An 86-amino-acid polypeptide reads, in one-letter code: Large ribosomal subunit protein uL23 (86 aa).

Belongs to the universal ribosomal protein uL23 family. As to quaternary structure, part of the 50S ribosomal subunit. Contacts protein L29.

Its function is as follows. Binds to 23S rRNA. One of the proteins that surrounds the polypeptide exit tunnel on the outside of the ribosome. This is Large ribosomal subunit protein uL23 from Methanococcus maripaludis (strain C6 / ATCC BAA-1332).